Reading from the N-terminus, the 119-residue chain is Ribosome-binding factor A (119 aa).

Belongs to the RbfA family. As to quaternary structure, monomer. Binds 30S ribosomal subunits, but not 50S ribosomal subunits or 70S ribosomes.

It localises to the cytoplasm. In terms of biological role, one of several proteins that assist in the late maturation steps of the functional core of the 30S ribosomal subunit. Associates with free 30S ribosomal subunits (but not with 30S subunits that are part of 70S ribosomes or polysomes). Required for efficient processing of 16S rRNA. May interact with the 5'-terminal helix region of 16S rRNA. The sequence is that of Ribosome-binding factor A from Chlorobium phaeovibrioides (strain DSM 265 / 1930) (Prosthecochloris vibrioformis (strain DSM 265)).